We begin with the raw amino-acid sequence, 310 residues long: Tyrosine recombinase XerC (310 aa).

Residues 11 to 97 (NSLQKPLSRF…SLRSFFDFLV (87 aa)) form the Core-binding (CB) domain. The Tyr recombinase domain occupies 118-298 (PLPKNLDVDE…DFQHLAQAYD (181 aa)). Residues arginine 157, lysine 181, histidine 250, arginine 253, and histidine 276 contribute to the active site. Tyrosine 285 functions as the O-(3'-phospho-DNA)-tyrosine intermediate in the catalytic mechanism.

This sequence belongs to the 'phage' integrase family. XerC subfamily. As to quaternary structure, forms a cyclic heterotetrameric complex composed of two molecules of XerC and two molecules of XerD.

It is found in the cytoplasm. Functionally, site-specific tyrosine recombinase, which acts by catalyzing the cutting and rejoining of the recombining DNA molecules. The XerC-XerD complex is essential to convert dimers of the bacterial chromosome into monomers to permit their segregation at cell division. It also contributes to the segregational stability of plasmids. This is Tyrosine recombinase XerC from Vibrio atlanticus (strain LGP32) (Vibrio splendidus (strain Mel32)).